Reading from the N-terminus, the 474-residue chain is Nitrosuccinate lyase (474 aa).

Ser295 (proton acceptor) is an active-site residue. Positions 301 and 303 each coordinate fumarate. Arg334 acts as the Proton donor in catalysis.

Belongs to the class-II fumarase/aspartase family.

It carries out the reaction 2-nitrobutanedioate = fumarate + nitrite + H(+). In terms of biological role, involved in the biosynthesis of desferrioxamine derivatives which have iron-binding properties and may act as siderophores. Catalyzes the formation of nitrous acid from nitrosuccinic acid (2-nitrobutanedioate) by elimination of its nitro group. The chain is Nitrosuccinate lyase from Streptomyces davaonensis (strain DSM 101723 / JCM 4913 / KCC S-0913 / 768).